Consider the following 596-residue polypeptide: Estrogen receptor (596 aa).

The tract at residues 1-185 (MTMTLHTKAS…AMESAKETRY (185 aa)) is modulating (transactivation AF-1); mediates interaction with MACROD1. O-linked (GlcNAc) serine glycosylation occurs at Ser-10. The segment at 36-48 (ERPLGEVYMDSSK) is required for interaction with NCOA1. Positions 36-175 (ERPLGEVYMD…LASTSDKGSM (140 aa)) are interaction with DDX5; self-association. Ser-104 and Ser-106 each carry phosphoserine; by CDK2. Ser-119 is modified (phosphoserine). A disordered region spans residues 144-175 (EAGPPAYYRPNSDNRRQGGRERLASTSDKGSM). The segment covering 155 to 166 (SDNRRQGGRERL) has biased composition (basic and acidic residues). Ser-168 bears the Phosphoserine; by CK2 mark. NR C4-type zinc fingers lie at residues 186 to 206 (CAVCNDYASGYHYGVWSCEGC) and 222 to 246 (CPATNQCTIDKNRRKSCQACRLRKC). The segment at residues 186-251 (CAVCNDYASG…RLRKCYEVGM (66 aa)) is a DNA-binding region (nuclear receptor). Residues 186 to 311 (CAVCNDYASG…TKKNSPVLSL (126 aa)) form a mediates interaction with DNTTIP2 region. The interval 252-311 (MKGGIRKDRRGGRMLKHKRQRDDGEGRNEAVPSGDMRAANLWPSPIMIKHTKKNSPVLSL) is hinge. The span at 259–270 (DRRGGRMLKHKR) shows a compositional bias: basic residues. The disordered stretch occupies residues 259-285 (DRRGGRMLKHKRQRDDGEGRNEAVPSG). Arg-261 is subject to Asymmetric dimethylarginine; by PRMT1. The interval 263–596 (GRMLKHKRQR…GEAENFPSTV (334 aa)) is interaction with AKAP13. The self-association stretch occupies residues 265–595 (MLKHKRQRDD…TGEAENFPST (331 aa)). The region spanning 312–548 (TADQMISALL…DLLLEMLDAH (237 aa)) is the NR LBD domain. The transactivation AF-2 stretch occupies residues 312–595 (TADQMISALL…TGEAENFPST (284 aa)). Residues Glu-354 and Arg-395 each contribute to the 17beta-estradiol site. Cys-448 is lipidated: S-palmitoyl cysteine. His-525 lines the 17beta-estradiol pocket. A Phosphotyrosine; by Tyr-kinases modification is found at Tyr-538. An O-linked (GlcNAc) threonine glycan is attached at Thr-572.

It belongs to the nuclear hormone receptor family. NR3 subfamily. As to quaternary structure, binds DNA as a homodimer. Can form a heterodimer with ESR2. Interacts with coactivator NCOA5. Interacts with PELP1, the interaction is enhanced by 17-beta-estradiol; the interaction increases ESR1 transcriptional activity. Interacts with NCOA7; the interaction is ligand-inducible. Interacts with AKAP13, CUEDC2, HEXIM1, KDM5A, MAP1S, SMARD1, and UBE1C. Interacts with MUC1; the interaction is stimulated by 7 beta-estradiol (E2) and enhances ESR1-mediated transcription. Interacts with DNTTIP2, and UIMC1. Interacts with KMT2D/MLL2. Interacts with ATAD2; the interaction is enhanced by estradiol. Interacts with KIF18A and LDB1. Interacts with RLIM (via its C-terminus). Interacts with MACROD1. Interacts with SH2D4A and PLCG. Interacts with SH2D4A; the interaction blocks binding to PLCG and inhibits estrogen-induced cell proliferation. Interacts with DYNLL1. Interacts with CCDC62; the interaction requires estradiol and appears to enhance the transcription of target genes. Interacts with NR2C1; the interaction prevents homodimerization of ESR1 and suppresses its transcriptional activity and cell growth. Interacts with DNAAF4. Interacts with PRMT2. Interacts with RBFOX2. Interacts with EP300; the interaction is estrogen-dependent and enhanced by CITED1. Interacts with CITED1; the interaction is estrogen-dependent. Interacts with FAM120B, FOXL2, PHB2 and SLC30A9. Interacts with coactivators NCOA3 and NCOA6. Interacts with STK3/MST2 only in the presence of SAV1 and vice-versa. Binds to CSNK1D. Interacts with NCOA2; NCOA2 can interact with ESR1 AF-1 and AF-2 domains simultaneously and mediate their transcriptional synergy. Interacts with DDX5. Interacts with NCOA1; the interaction seems to require a self-association of N-terminal and C-terminal regions. Interacts with ZNF366, DDX17, NFKB1, RELA, SP1 and SP3. Interacts with NRIP1. Interacts with GPER1; the interaction occurs in an estrogen-dependent manner. Interacts with CLOCK and the interaction is stimulated by estrogen. Interacts with TRIP4 (ufmylated); estrogen dependent. Interacts with LMTK3; the interaction phosphorylates ESR1 (in vitro) and protects it against proteasomal degradation. Interacts with CCAR2 (via N-terminus) in a ligand-independent manner. Interacts with ZFHX3. Interacts with SFR1 in a ligand-dependent and -independent manner. Interacts with DCAF13, LATS1 and DCAF1; regulates ESR1 ubiquitination and ubiquitin-mediated proteasomal degradation. Interacts (via DNA-binding domain) with POU4F2 (C-terminus); this interaction increases the estrogen receptor ESR1 transcriptional activity in a DNA- and ligand 17-beta-estradiol-independent manner. Interacts with ESRRB isoform 1. Interacts with UBE3A and WBP2. Interacts with GTF2B. Interacts with RBM39. In the absence of hormonal ligand, interacts with TACC1. Interacts with PI3KR1 or PI3KR2 and PTK2/FAK1. Interacts with SRC. Interacts with BAG1; the interaction is promoted in the absence of estradiol (17-beta-estradiol/E2). Interacts with and ubiquitinated by STUB1; the interaction is promoted in the absence of estradiol (17-beta-estradiol/E2). Interacts with NEDD8. Glycosylated; contains N-acetylglucosamine, probably O-linked. In terms of processing, ubiquitinated; regulated by LATS1 via DCAF1 it leads to ESR1 proteasomal degradation. Deubiquitinated by OTUB1. Ubiquitinated by STUB1/CHIP; in the CA1 hippocampal region following loss of endogenous circulating estradiol (17-beta-estradiol/E2). Ubiquitinated by UBR5, leading to its degradation: UBR5 specifically recognizes and binds ligand-bound ESR1 when it is not associated with coactivators (NCOAs). In presence of NCOAs, the UBR5-degron is not accessible, preventing its ubiquitination and degradation. Post-translationally, phosphorylated by cyclin A/CDK2 and CK1. Phosphorylation probably enhances transcriptional activity. Dephosphorylation at Ser-119 by PPP5C inhibits its transactivation activity. Phosphorylated by LMTK3 (in vitro). Palmitoylated at Cys-448 by ZDHHC7 and ZDHHC21. Palmitoylation is required for plasma membrane targeting and for rapid intracellular signaling via ERK and AKT kinases and cAMP generation, but not for signaling mediated by the nuclear hormone receptor. In terms of processing, dimethylated by PRMT1 at Arg-261. The methylation may favor cytoplasmic localization. Demethylated by JMJD6 at Arg-261.

It localises to the nucleus. The protein localises to the cytoplasm. It is found in the golgi apparatus. The protein resides in the cell membrane. Its function is as follows. Nuclear hormone receptor. The steroid hormones and their receptors are involved in the regulation of eukaryotic gene expression and affect cellular proliferation and differentiation in target tissues. Ligand-dependent nuclear transactivation involves either direct homodimer binding to a palindromic estrogen response element (ERE) sequence or association with other DNA-binding transcription factors, such as AP-1/c-Jun, c-Fos, ATF-2, Sp1 and Sp3, to mediate ERE-independent signaling. Ligand binding induces a conformational change allowing subsequent or combinatorial association with multiprotein coactivator complexes through LXXLL motifs of their respective components. Mutual transrepression occurs between the estrogen receptor (ER) and NF-kappa-B in a cell-type specific manner. Decreases NF-kappa-B DNA-binding activity and inhibits NF-kappa-B-mediated transcription from the IL6 promoter and displace RELA/p65 and associated coregulators from the promoter. Recruited to the NF-kappa-B response element of the CCL2 and IL8 promoters and can displace CREBBP. Present with NF-kappa-B components RELA/p65 and NFKB1/p50 on ERE sequences. Can also act synergistically with NF-kappa-B to activate transcription involving respective recruitment adjacent response elements; the function involves CREBBP. Can activate the transcriptional activity of TFF1. Also mediates membrane-initiated estrogen signaling involving various kinase cascades. Essential for MTA1-mediated transcriptional regulation of BRCA1 and BCAS3. Maintains neuronal survival in response to ischemic reperfusion injury when in the presence of circulating estradiol (17-beta-estradiol/E2). The protein is Estrogen receptor (ESR1) of Bos taurus (Bovine).